We begin with the raw amino-acid sequence, 452 residues long: Glutamate--tRNA ligase 2 (452 aa).

The 'HIGH' region signature appears at Pro-8–Asn-18. Residues Lys-246 to Arg-250 carry the 'KMSKS' region motif. Residue Lys-249 coordinates ATP.

This sequence belongs to the class-I aminoacyl-tRNA synthetase family. Glutamate--tRNA ligase type 1 subfamily. In terms of assembly, monomer.

It is found in the cytoplasm. The catalysed reaction is tRNA(Glu) + L-glutamate + ATP = L-glutamyl-tRNA(Glu) + AMP + diphosphate. In terms of biological role, catalyzes the attachment of glutamate to tRNA(Glu) in a two-step reaction: glutamate is first activated by ATP to form Glu-AMP and then transferred to the acceptor end of tRNA(Glu). This chain is Glutamate--tRNA ligase 2, found in Erythrobacter litoralis (strain HTCC2594).